Reading from the N-terminus, the 148-residue chain is Cytochrome c-type biogenesis protein CcmE (148 aa).

Topologically, residues 1–7 are cytoplasmic; sequence MKPRSKR. Residues 8-28 traverse the membrane as a helical; Signal-anchor for type II membrane protein segment; that stretch reads LLLVAGAVALLVGAVALVLNA. Over 29 to 148 the chain is Periplasmic; it reads FQQNLVFFHT…AQKAAQTVQQ (120 aa). Positions 123 and 127 each coordinate heme.

The protein belongs to the CcmE/CycJ family.

It is found in the cell inner membrane. Heme chaperone required for the biogenesis of c-type cytochromes. Transiently binds heme delivered by CcmC and transfers the heme to apo-cytochromes in a process facilitated by CcmF and CcmH. The sequence is that of Cytochrome c-type biogenesis protein CcmE from Aromatoleum aromaticum (strain DSM 19018 / LMG 30748 / EbN1) (Azoarcus sp. (strain EbN1)).